The following is a 165-amino-acid chain: Crossover junction endodeoxyribonuclease RuvC (165 aa).

Residues Asp7, Glu68, and His142 contribute to the active site. 3 residues coordinate Mg(2+): Asp7, Glu68, and His142.

The protein belongs to the RuvC family. Homodimer which binds Holliday junction (HJ) DNA. The HJ becomes 2-fold symmetrical on binding to RuvC with unstacked arms; it has a different conformation from HJ DNA in complex with RuvA. In the full resolvosome a probable DNA-RuvA(4)-RuvB(12)-RuvC(2) complex forms which resolves the HJ. Requires Mg(2+) as cofactor.

It is found in the cytoplasm. The enzyme catalyses Endonucleolytic cleavage at a junction such as a reciprocal single-stranded crossover between two homologous DNA duplexes (Holliday junction).. Functionally, the RuvA-RuvB-RuvC complex processes Holliday junction (HJ) DNA during genetic recombination and DNA repair. Endonuclease that resolves HJ intermediates. Cleaves cruciform DNA by making single-stranded nicks across the HJ at symmetrical positions within the homologous arms, yielding a 5'-phosphate and a 3'-hydroxyl group; requires a central core of homology in the junction. The consensus cleavage sequence is 5'-(A/T)TT(C/G)-3'. Cleavage occurs on the 3'-side of the TT dinucleotide at the point of strand exchange. HJ branch migration catalyzed by RuvA-RuvB allows RuvC to scan DNA until it finds its consensus sequence, where it cleaves and resolves the cruciform DNA. In Anaplasma marginale (strain St. Maries), this protein is Crossover junction endodeoxyribonuclease RuvC.